Consider the following 392-residue polypeptide: Caveolae-associated protein 1 (392 aa).

M1 carries the N-acetylmethionine modification. Positions 1 to 10 (MEDVTLHIVE) are enriched in basic and acidic residues. The tract at residues 1–45 (MEDVTLHIVERPYSGYPDASSEGPEPTPGEARATEEPSGTGSDEL) is disordered. A required for homotrimerization and for interaction with CAVIN2 and CAVIN3 region spans residues 1–100 (MEDVTLHIVE…IQGELSKLGK (100 aa)). Phosphoserine occurs at positions 21 and 38. T40 carries the post-translational modification Phosphothreonine. Residues S42 and S48 each carry the phosphoserine modification. Positions 54 to 64 (VLVLSLLDKII) are nuclear export signal. The tract at residues 55–77 (LVLSLLDKIIGAVDQIQLTQAQL) is leucine-zipper 1. K118 is covalently cross-linked (Glycyl lysine isopeptide (Lys-Gly) (interchain with G-Cter in SUMO2)). Position 120 is a phosphoserine (S120). Residue K124 forms a Glycyl lysine isopeptide (Lys-Gly) (interchain with G-Cter in SUMO2) linkage. The tract at residues 138–154 (KKLEVNEAELLRRRNFK) is nuclear localization signal. Phosphotyrosine is present on Y158. A Glycyl lysine isopeptide (Lys-Gly) (interchain with G-Cter in SUMO1); alternate cross-link involves residue K163. A Glycyl lysine isopeptide (Lys-Gly) (interchain with G-Cter in SUMO2); alternate cross-link involves residue K163. Residue K167 forms a Glycyl lysine isopeptide (Lys-Gly) (interchain with G-Cter in SUMO2) linkage. A leucine-zipper 2 region spans residues 168 to 188 (LSVSKSLKESEALPEKEGDEL). Phosphoserine is present on residues S169 and S171. A Glycyl lysine isopeptide (Lys-Gly) (interchain with G-Cter in SUMO2) cross-link involves residue K172. Residues S173 and S177 each carry the phosphoserine modification. Residues 173–183 (SLKESEALPEK) are compositionally biased toward basic and acidic residues. Residues 173–198 (SLKESEALPEKEGDELGEGERPEEDA) form a disordered region. Positions 184 to 198 (EGDELGEGERPEEDA) are enriched in acidic residues. A coiled-coil region spans residues 201-284 (IELSSDEAVE…RMNKLGTRLV (84 aa)). Residues S204 and S205 each carry the phosphoserine modification. Residues 235–251 (KKAFSKEKMEKTKVRTR) form a nuclear localization signal region. Positions 259 to 299 (LKTKENLEKTRHTLEKRMNKLGTRLVPVERREKLKTSRDKL) are leucine-zipper 3. S302 bears the Phosphoserine mark. The residue at position 304 (T304) is a Phosphothreonine. Y310 bears the Phosphotyrosine mark. K328 participates in a covalent cross-link: Glycyl lysine isopeptide (Lys-Gly) (interchain with G-Cter in SUMO2). A disordered region spans residues 347-367 (GPDDDEVGAERGAETDLLRGS). Positions 354–363 (GAERGAETDL) are enriched in basic and acidic residues. 5 positions are modified to phosphoserine: S367, S368, S381, S389, and S391.

This sequence belongs to the CAVIN family. Component of the CAVIN complex composed of CAVIN1, CAVIN2, CAVIN3 and CAVIN4. Interacts with RNA polymerase I subunit POLR1A/RPA1 and TTF1. Binds the 3' end of pre-rRNA. Interacts with transcription factor ZNF148. Interacts with LIPE in the adipocyte cytoplasm. Interacts with CAV1, CAV3, CAVIN2, CAVIN3 and CAVIN4. In terms of processing, phosphorylated. Present in active and inactive forms. Changes in phosphorylation pattern may alter activity. Phosphorylation at Tyr-158 is essential for its function in the regulation of ribosomal transcriptional activity. Post-translationally, monoubiquitinated. Expressed in the adipocyte (at protein level). Expressed in all striated and smooth muscles tested including diaphragm, esophageal striated muscle, fibroblast, endocardial endothelium, epicardial mesothelium, intestinal smooth muscle, masseter, soleus muscle, vascular smooth muscle and white gastrocnemius muscle (at protein level). Expressed in the endothelium and perineural sheath (at protein level). Not expressed in hepatocytes.

It is found in the membrane. The protein resides in the caveola. It localises to the cell membrane. The protein localises to the microsome. Its subcellular location is the endoplasmic reticulum. It is found in the cytoplasm. The protein resides in the cytosol. It localises to the mitochondrion. The protein localises to the nucleus. Its function is as follows. Plays an important role in caveolae formation and organization. Essential for the formation of caveolae in all tissues. Core component of the CAVIN complex which is essential for recruitment of the complex to the caveolae in presence of calveolin-1 (CAV1). Essential for normal oligomerization of CAV1. Promotes ribosomal transcriptional activity in response to metabolic challenges in the adipocytes and plays an important role in the formation of the ribosomal transcriptional loop. Dissociates transcription complexes paused by DNA-bound TTF1, thereby releasing both RNA polymerase I and pre-RNA from the template. The caveolae biogenesis pathway is required for the secretion of proteins such as GASK1A. This chain is Caveolae-associated protein 1, found in Rattus norvegicus (Rat).